The following is a 123-amino-acid chain: Small ribosomal subunit protein uS12cz/uS12cy (123 aa).

The protein belongs to the universal ribosomal protein uS12 family. As to quaternary structure, part of the 30S ribosomal subunit.

Its subcellular location is the plastid. The protein resides in the chloroplast. Its function is as follows. With S4 and S5 plays an important role in translational accuracy. Located at the interface of the 30S and 50S subunits. This Gossypium barbadense (Sea Island cotton) protein is Small ribosomal subunit protein uS12cz/uS12cy (rps12-A).